Here is a 245-residue protein sequence, read N- to C-terminus: 1-(5-phosphoribosyl)-5-[(5-phosphoribosylamino)methylideneamino] imidazole-4-carboxamide isomerase (245 aa).

The Proton acceptor role is filled by Asp-7. Catalysis depends on Asp-129, which acts as the Proton donor.

This sequence belongs to the HisA/HisF family.

It is found in the cytoplasm. It catalyses the reaction 1-(5-phospho-beta-D-ribosyl)-5-[(5-phospho-beta-D-ribosylamino)methylideneamino]imidazole-4-carboxamide = 5-[(5-phospho-1-deoxy-D-ribulos-1-ylimino)methylamino]-1-(5-phospho-beta-D-ribosyl)imidazole-4-carboxamide. It participates in amino-acid biosynthesis; L-histidine biosynthesis; L-histidine from 5-phospho-alpha-D-ribose 1-diphosphate: step 4/9. The chain is 1-(5-phosphoribosyl)-5-[(5-phosphoribosylamino)methylideneamino] imidazole-4-carboxamide isomerase from Psychromonas ingrahamii (strain DSM 17664 / CCUG 51855 / 37).